The following is a 121-amino-acid chain: Ribonuclease P protein component (121 aa).

This sequence belongs to the RnpA family. Consists of a catalytic RNA component (M1 or rnpB) and a protein subunit.

It catalyses the reaction Endonucleolytic cleavage of RNA, removing 5'-extranucleotides from tRNA precursor.. In terms of biological role, RNaseP catalyzes the removal of the 5'-leader sequence from pre-tRNA to produce the mature 5'-terminus. It can also cleave other RNA substrates such as 4.5S RNA. The protein component plays an auxiliary but essential role in vivo by binding to the 5'-leader sequence and broadening the substrate specificity of the ribozyme. The chain is Ribonuclease P protein component from Chromobacterium violaceum (strain ATCC 12472 / DSM 30191 / JCM 1249 / CCUG 213 / NBRC 12614 / NCIMB 9131 / NCTC 9757 / MK).